We begin with the raw amino-acid sequence, 543 residues long: Keratin, type II cytoskeletal 75 (543 aa).

Residues 1–16 show a composition bias toward polar residues; that stretch reads MSRQSTITFQTSSRRG. The disordered stretch occupies residues 1-48; the sequence is MSRQSTITFQTSSRRGFSTASATTPATSRSRFSSASVTHSPAGSGGLG. A head region spans residues 1–144; sequence MSRQSTITFQ…DPNIQRVRKE (144 aa). Over residues 17–36 the composition is skewed to low complexity; that stretch reads FSTASATTPATSRSRFSSAS. Residues 145-180 form a coil 1A region; that stretch reads EREQIKTLNNKFASFIDKVRFLEQQNKVLETKWSLL. One can recognise an IF rod domain in the interval 145 to 458; that stretch reads EREQIKTLNN…KLLEGEECRL (314 aa). Residues 181–199 are linker 1; that stretch reads QEQGTRTVRQSLEPFFEAY. The tract at residues 200-292 is coil 1B; that stretch reads ITDLRRQLDS…LFEAELCQMQ (93 aa). The linker 12 stretch occupies residues 293–315; that stretch reads TRVSDTSVVLSMDNNRSLDLDSI. Residues 316–454 are coil 2; it reads IAEVKAQYEE…ATYRKLLEGE (139 aa). The tract at residues 455–543 is tail; that stretch reads ECRLSGEGVS…TSSSRKSYKH (89 aa). The segment at 511–543 is disordered; it reads SSFSNSSSRGLGGSGSSFKFVSTTSSSRKSYKH. The segment covering 526–543 has biased composition (low complexity); sequence SSFKFVSTTSSSRKSYKH.

The protein belongs to the intermediate filament family. Heterodimer of a type I and a type II keratin. May associate with KRT17.

Functionally, plays a central role in hair and nail formation. Essential component of keratin intermediate filaments in the companion layer of the hair follicle. The chain is Keratin, type II cytoskeletal 75 (KRT75) from Bos taurus (Bovine).